A 338-amino-acid chain; its full sequence is Glycerol-3-phosphate dehydrogenase [NAD(P)+] (338 aa).

3 residues coordinate NADPH: serine 13, tryptophan 14, and lysine 108. The sn-glycerol 3-phosphate site is built by lysine 108, glycine 139, and serine 141. NADPH is bound at residue alanine 143. Sn-glycerol 3-phosphate is bound by residues lysine 194, aspartate 247, serine 257, arginine 258, and asparagine 259. The active-site Proton acceptor is lysine 194. Arginine 258 lines the NADPH pocket. Residues valine 282 and glutamate 284 each coordinate NADPH.

Belongs to the NAD-dependent glycerol-3-phosphate dehydrogenase family.

Its subcellular location is the cytoplasm. The catalysed reaction is sn-glycerol 3-phosphate + NAD(+) = dihydroxyacetone phosphate + NADH + H(+). The enzyme catalyses sn-glycerol 3-phosphate + NADP(+) = dihydroxyacetone phosphate + NADPH + H(+). Its pathway is membrane lipid metabolism; glycerophospholipid metabolism. In terms of biological role, catalyzes the reduction of the glycolytic intermediate dihydroxyacetone phosphate (DHAP) to sn-glycerol 3-phosphate (G3P), the key precursor for phospholipid synthesis. The polypeptide is Glycerol-3-phosphate dehydrogenase [NAD(P)+] (Streptococcus pyogenes serotype M2 (strain MGAS10270)).